A 668-amino-acid polypeptide reads, in one-letter code: DNA-directed RNA polymerase subunit beta' (668 aa).

Zn(2+) contacts are provided by Cys-71, Cys-73, Cys-91, and Cys-94. Mg(2+) is bound by residues Asp-505, Asp-507, and Asp-509.

It belongs to the RNA polymerase beta' chain family. RpoC1 subfamily. In terms of assembly, in plastids the minimal PEP RNA polymerase catalytic core is composed of four subunits: alpha, beta, beta', and beta''. When a (nuclear-encoded) sigma factor is associated with the core the holoenzyme is formed, which can initiate transcription. The cofactor is Mg(2+). Zn(2+) is required as a cofactor.

It is found in the plastid. Its subcellular location is the chloroplast. It carries out the reaction RNA(n) + a ribonucleoside 5'-triphosphate = RNA(n+1) + diphosphate. In terms of biological role, DNA-dependent RNA polymerase catalyzes the transcription of DNA into RNA using the four ribonucleoside triphosphates as substrates. In Mesostigma viride (Green alga), this protein is DNA-directed RNA polymerase subunit beta'.